A 469-amino-acid polypeptide reads, in one-letter code: Ubiquitin carboxyl-terminal hydrolase MINDY-1 (469 aa).

The interval 1–85 (MEHHQPEDPA…APPGPTLGTL (85 aa)) is disordered. A compositionally biased stretch (basic and acidic residues) spans 34–53 (HPQDTDARDADGEAGEREPA). Phosphoserine is present on Ser103. Cys137 serves as the catalytic Nucleophile. His319 (proton acceptor) is an active-site residue. Positions 388–426 (QVDQDYLIALSLQQQQPRGTLGLTDLELAQQLQQEEYQQ) are ubiquitin-binding domain (UBD). The disordered stretch occupies residues 428-469 (QAAQPVWMRTRALSPQGRGATSGRPAGERRQRPKHESDCILL). Residue Ser441 is modified to Phosphoserine. Residues 453-469 (AGERRQRPKHESDCILL) show a composition bias toward basic and acidic residues.

The protein belongs to the MINDY deubiquitinase family. FAM63 subfamily.

The catalysed reaction is Thiol-dependent hydrolysis of ester, thioester, amide, peptide and isopeptide bonds formed by the C-terminal Gly of ubiquitin (a 76-residue protein attached to proteins as an intracellular targeting signal).. Hydrolase that can specifically remove 'Lys-48'-linked conjugated ubiquitin from proteins. Has exodeubiquitinase activity and has a preference for long polyubiquitin chains. May play a regulatory role at the level of protein turnover. The protein is Ubiquitin carboxyl-terminal hydrolase MINDY-1 (MINDY1) of Pongo abelii (Sumatran orangutan).